The chain runs to 437 residues: Histidinol dehydrogenase (437 aa).

Residues Tyr-133, Gln-191, and Asn-214 each coordinate NAD(+). Substrate is bound by residues Ser-240, Gln-262, and His-265. The Zn(2+) site is built by Gln-262 and His-265. Residues Glu-329 and His-330 each act as proton acceptor in the active site. The substrate site is built by His-330, Asp-363, Glu-417, and His-422. Asp-363 is a Zn(2+) binding site. His-422 serves as a coordination point for Zn(2+).

Belongs to the histidinol dehydrogenase family. In terms of assembly, homodimer. Zn(2+) serves as cofactor.

The enzyme catalyses L-histidinol + 2 NAD(+) + H2O = L-histidine + 2 NADH + 3 H(+). It participates in amino-acid biosynthesis; L-histidine biosynthesis; L-histidine from 5-phospho-alpha-D-ribose 1-diphosphate: step 9/9. Its function is as follows. Catalyzes the sequential NAD-dependent oxidations of L-histidinol to L-histidinaldehyde and then to L-histidine. The polypeptide is Histidinol dehydrogenase (Blochmanniella floridana).